The sequence spans 147 residues: UPF0260 protein Ent638_2368 (147 aa).

This sequence belongs to the UPF0260 family.

The polypeptide is UPF0260 protein Ent638_2368 (Enterobacter sp. (strain 638)).